A 478-amino-acid polypeptide reads, in one-letter code: Kynurenine 3-monooxygenase (478 aa).

FAD contacts are provided by residues Val-19, 37 to 40 (YEAR), and Ala-57. Residues Arg-85 and Tyr-99 each contribute to the L-kynurenine site. FAD is bound by residues Arg-111, Leu-136, Thr-172, Asp-304, and 317 to 318 (MN). Asn-363 and Tyr-398 together coordinate L-kynurenine. A run of 2 helical transmembrane segments spans residues 385–404 (FLHA…VAFT) and 425–445 (GLFV…VHHL).

Belongs to the aromatic-ring hydroxylase family. KMO subfamily. FAD is required as a cofactor. Highest activity in liver and kidney. Low activity in spleen, stomach, intestinal tract, esophagus, heart and lung.

It is found in the mitochondrion outer membrane. It catalyses the reaction L-kynurenine + NADPH + O2 + H(+) = 3-hydroxy-L-kynurenine + NADP(+) + H2O. Its pathway is cofactor biosynthesis; NAD(+) biosynthesis; quinolinate from L-kynurenine: step 1/3. Catalyzes the hydroxylation of L-kynurenine (L-Kyn) to form 3-hydroxy-L-kynurenine (L-3OHKyn). Required for synthesis of quinolinic acid, a neurotoxic NMDA receptor antagonist and potential endogenous inhibitor of NMDA receptor signaling in axonal targeting, synaptogenesis and apoptosis during brain development. Quinolinic acid may also affect NMDA receptor signaling in pancreatic beta cells, osteoblasts, myocardial cells, and the gastrointestinal tract. The polypeptide is Kynurenine 3-monooxygenase (Rattus norvegicus (Rat)).